The sequence spans 379 residues: Glutamate 5-kinase (379 aa).

Position 19 (Lys19) interacts with ATP. The substrate site is built by Ser59, Asp146, and Asn158. 178 to 179 (TD) is an ATP binding site. Positions 285-363 (RGAVTVDAGA…SEFERLLGYV (79 aa)) constitute a PUA domain.

It belongs to the glutamate 5-kinase family.

Its subcellular location is the cytoplasm. The catalysed reaction is L-glutamate + ATP = L-glutamyl 5-phosphate + ADP. It functions in the pathway amino-acid biosynthesis; L-proline biosynthesis; L-glutamate 5-semialdehyde from L-glutamate: step 1/2. Functionally, catalyzes the transfer of a phosphate group to glutamate to form L-glutamate 5-phosphate. This Variovorax paradoxus (strain S110) protein is Glutamate 5-kinase.